The primary structure comprises 274 residues: Large ribosomal subunit protein uL2cz/uL2cy (274 aa).

2 disordered regions span residues 1–21 and 225–254; these read MAIH…VDSQ and PVDH…PALG.

The protein belongs to the universal ribosomal protein uL2 family. Part of the 50S ribosomal subunit.

The protein resides in the plastid. It localises to the chloroplast. In Draba nemorosa (Woodland whitlowgrass), this protein is Large ribosomal subunit protein uL2cz/uL2cy (rpl2-A).